Reading from the N-terminus, the 1356-residue chain is Vegetative incompatibility protein HET-E-1 (1356 aa).

The NACHT domain maps to 294-629; sequence RLLWINGDPG…DFLLGTASDK (336 aa). Residue 300 to 307 coordinates GTP; that stretch reads GDPGKGKT. WD repeat units lie at residues 839–869, 881–911, 923–953, 965–995, 1007–1037, 1049–1079, 1091–1121, 1133–1163, 1175–1205, and 1217–1247; these read GHGSSVLSVAFSADGQRVASGSDDKTIKIWD, GHGGSVWSVAFSPDRERVASGSDDKTIKIWD, GHGGRVQSVAFSPDGQRVASGSDDHTIKIWD, GHGSSVLSVAFSPDGQRVASGSGDKTIKIWD, GHGGSVWSVAFSPDGQRVASGSDDKTIKIWD, GHGGWVQSVVFSPDGQRVASGSDDHTIKIWD, GHGDSVWSVAFSPDGQRVASGSIDGTIKIWD, GHGGWVHSVAFSPDGQRVASGSIDGTIKIWD, GHGGWVQSVAFSPDGQRVASGSSDKTIKIWD, and GHGGWVQSVAFSPDGQRVASGSSDNTIKIWD.

In terms of biological role, responsible for vegetative incompatibility through specific interactions with different alleles of the unlinked gene, het-c. The protein is Vegetative incompatibility protein HET-E-1 (HET-E1) of Podospora anserina (Pleurage anserina).